The primary structure comprises 541 residues: RING finger protein 37 (541 aa).

Positions D258–P338 constitute a U-box domain. R451 carries the asymmetric dimethylarginine modification. Residues C483 to Q528 form an RING-type zinc finger.

As to quaternary structure, interacts with UBE2L3. Interacts with VCP. As to expression, expressed in liver, heart, brain, kidney and testis.

It localises to the nucleus. It catalyses the reaction S-ubiquitinyl-[E2 ubiquitin-conjugating enzyme]-L-cysteine + [acceptor protein]-L-lysine = [E2 ubiquitin-conjugating enzyme]-L-cysteine + N(6)-ubiquitinyl-[acceptor protein]-L-lysine.. It participates in protein modification; protein ubiquitination. Its function is as follows. May have a ubiquitin-protein ligase activity acting as an E3 ubiquitin-protein ligase or as a ubiquitin-ubiquitin ligase promoting elongation of ubiquitin chains on substrates. This is RING finger protein 37 from Homo sapiens (Human).